A 244-amino-acid chain; its full sequence is 5-oxoprolinase subunit A (244 aa).

This sequence belongs to the LamB/PxpA family. Forms a complex composed of PxpA, PxpB and PxpC.

The catalysed reaction is 5-oxo-L-proline + ATP + 2 H2O = L-glutamate + ADP + phosphate + H(+). Functionally, catalyzes the cleavage of 5-oxoproline to form L-glutamate coupled to the hydrolysis of ATP to ADP and inorganic phosphate. In Escherichia coli (strain SMS-3-5 / SECEC), this protein is 5-oxoprolinase subunit A.